The chain runs to 214 residues: Holliday junction branch migration complex subunit RuvA (214 aa).

The domain I stretch occupies residues 1–68; that stretch reads MIGFLQGKVL…QPKPVLIGFD (68 aa). The tract at residues 69–146 is domain II; the sequence is SAEEKDFFQL…RFLLAADEAG (78 aa). A flexible linker region spans residues 147 to 160; it reads AGDGVSKTGTPSLP. The segment at 161-214 is domain III; it reads IQKAIDQVVDVLVQQLGHTPSAAKMMVAQALDRDPEIMTPEALFDEVYKGDVDA.

Belongs to the RuvA family. Homotetramer. Forms an RuvA(8)-RuvB(12)-Holliday junction (HJ) complex. HJ DNA is sandwiched between 2 RuvA tetramers; dsDNA enters through RuvA and exits via RuvB. An RuvB hexamer assembles on each DNA strand where it exits the tetramer. Each RuvB hexamer is contacted by two RuvA subunits (via domain III) on 2 adjacent RuvB subunits; this complex drives branch migration. In the full resolvosome a probable DNA-RuvA(4)-RuvB(12)-RuvC(2) complex forms which resolves the HJ.

The protein localises to the cytoplasm. Its function is as follows. The RuvA-RuvB-RuvC complex processes Holliday junction (HJ) DNA during genetic recombination and DNA repair, while the RuvA-RuvB complex plays an important role in the rescue of blocked DNA replication forks via replication fork reversal (RFR). RuvA specifically binds to HJ cruciform DNA, conferring on it an open structure. The RuvB hexamer acts as an ATP-dependent pump, pulling dsDNA into and through the RuvAB complex. HJ branch migration allows RuvC to scan DNA until it finds its consensus sequence, where it cleaves and resolves the cruciform DNA. The sequence is that of Holliday junction branch migration complex subunit RuvA from Desulforapulum autotrophicum (strain ATCC 43914 / DSM 3382 / VKM B-1955 / HRM2) (Desulfobacterium autotrophicum).